Reading from the N-terminus, the 116-residue chain is Ribonuclease P protein component (116 aa).

This sequence belongs to the RnpA family. In terms of assembly, consists of a catalytic RNA component (M1 or rnpB) and a protein subunit.

The enzyme catalyses Endonucleolytic cleavage of RNA, removing 5'-extranucleotides from tRNA precursor.. Functionally, RNaseP catalyzes the removal of the 5'-leader sequence from pre-tRNA to produce the mature 5'-terminus. It can also cleave other RNA substrates such as 4.5S RNA. The protein component plays an auxiliary but essential role in vivo by binding to the 5'-leader sequence and broadening the substrate specificity of the ribozyme. In Exiguobacterium sibiricum (strain DSM 17290 / CCUG 55495 / CIP 109462 / JCM 13490 / 255-15), this protein is Ribonuclease P protein component.